The following is a 465-amino-acid chain: 28S rRNA (cytosine-C(5))-methyltransferase (465 aa).

N-acetylglycine is present on glycine 2. Serine 167 carries the post-translational modification Phosphoserine. Residues 234–240 (CAAPGNK), aspartate 258, arginine 263, and aspartate 305 each bind S-adenosyl-L-methionine. Cysteine 359 acts as the Nucleophile in catalysis. The interval 430-465 (TPAPQTDAMDPEPLSQVPKRKRRRKAAVGASMQPST) is disordered.

It belongs to the class I-like SAM-binding methyltransferase superfamily. RsmB/NOP family. In terms of tissue distribution, in the hippocampus, specifically expressed in adult hippocampal NG2-positive oligodendrocyte precursor cells (at protein level).

The protein localises to the nucleus. It is found in the nucleolus. The catalysed reaction is a cytidine in 28S rRNA + S-adenosyl-L-methionine = a 5-methylcytidine in 28S rRNA + S-adenosyl-L-homocysteine + H(+). Its function is as follows. S-adenosyl-L-methionine-dependent methyltransferase that specifically methylates the C(5) position of cytosine 3438 (m5C3438) in 28S rRNA. m5C3782 promotes protein translation without affecting ribosome biogenesis and fidelity. Required for corpus callosum and cerebral cortex development. This Mus musculus (Mouse) protein is 28S rRNA (cytosine-C(5))-methyltransferase.